Here is a 331-residue protein sequence, read N- to C-terminus: B-box zinc finger protein 21 (331 aa).

8 residues coordinate Zn(2+): cysteine 5, cysteine 8, cysteine 28, histidine 34, cysteine 60, cysteine 63, cysteine 83, and histidine 93. The B box-type 1; atypical zinc-finger motif lies at 5 to 47 (CDVCDKEEASVFCTADEASLCGGCDHQVHHANKLASKHLRFSL). The B box-type 2; atypical zinc finger occupies 60-102 (CDICQDKKALLFCQQDRAILCKDCDSSIHAANEHTKKHDRFLL). 2 stretches are compositionally biased toward low complexity: residues 115–126 (KPTSKSSSSSSS) and 228–238 (NNNNNNNNNNN). Disordered stretches follow at residues 115 to 167 (KPTS…GGDA) and 209 to 241 (DDDGVLPYMEPEDDNNTKRNNNNNNNNNNNTVS).

As to quaternary structure, interacts with COP1, HY5 and BBX32. Interacts with FLZ1.

It localises to the nucleus. In terms of biological role, transcription activator that acts as a positive regulator of seedling photomorphogenesis. Acts downstream of COP1 and play an important role in early and long-term adjustment of the shade avoidance syndrome (SAS) responses in natural environments. The polypeptide is B-box zinc finger protein 21 (Arabidopsis thaliana (Mouse-ear cress)).